Consider the following 451-residue polypeptide: Clusterin (451 aa).

Positions 1–18 are cleaved as a signal peptide; the sequence is MELPLLALLSLGLVCQGG. 5 disulfides stabilise this stretch: C98–C314, C109–C306, C112–C303, C117–C296, and C125–C286. N-linked (GlcNAc...) asparagine glycosylation is found at N99, N141, N278, N355, N375, and N447.

It belongs to the clusterin family. In terms of assembly, antiparallel disulfide-linked heterodimer of an alpha chain and a beta chain. Self-associates and forms higher oligomers. Interacts with a broad range of misfolded proteins. In terms of processing, proteolytically cleaved on its way through the secretory system, probably within the Golgi lumen. Polyubiquitinated, leading to proteasomal degradation.

The protein resides in the secreted. Its subcellular location is the cytoplasmic vesicle. The protein localises to the secretory vesicle. It is found in the chromaffin granule. It localises to the nucleus. The protein resides in the cytoplasm. Its subcellular location is the mitochondrion membrane. The protein localises to the cytosol. It is found in the endoplasmic reticulum. In terms of biological role, functions as extracellular chaperone that prevents aggregation of nonnative proteins. Prevents stress-induced aggregation of blood plasma proteins. Does not require ATP. Maintains partially unfolded proteins in a state appropriate for subsequent refolding by other chaperones, such as HSPA8/HSC70. Does not refold proteins by itself. Binding to cell surface receptors triggers internalization of the chaperone-client complex and subsequent lysosomal or proteasomal degradation. When secreted, protects cells against apoptosis and against cytolysis by complement: inhibits assembly of the complement membrane attack complex (MAC) by preventing polymerization of C9 pore component of the MAC complex. Intracellular forms interact with ubiquitin and SCF (SKP1-CUL1-F-box protein) E3 ubiquitin-protein ligase complexes and promote the ubiquitination and subsequent proteasomal degradation of target proteins. Modulates NF-kappa-B transcriptional activity. Promotes apoptosis when in the nucleus. Inhibits apoptosis when associated with the mitochondrial membrane by interference with BAX-dependent release of cytochrome c into the cytoplasm. Plays a role in the regulation of cell proliferation. The polypeptide is Clusterin (CLU) (Coturnix japonica (Japanese quail)).